The primary structure comprises 301 residues: Acetylglutamate kinase (301 aa).

Substrate contacts are provided by residues 68 to 69 (GG), Arg-90, and Asn-197.

Belongs to the acetylglutamate kinase family. ArgB subfamily.

It is found in the cytoplasm. The enzyme catalyses N-acetyl-L-glutamate + ATP = N-acetyl-L-glutamyl 5-phosphate + ADP. It participates in amino-acid biosynthesis; L-arginine biosynthesis; N(2)-acetyl-L-ornithine from L-glutamate: step 2/4. Catalyzes the ATP-dependent phosphorylation of N-acetyl-L-glutamate. The chain is Acetylglutamate kinase from Nitrosococcus oceani (strain ATCC 19707 / BCRC 17464 / JCM 30415 / NCIMB 11848 / C-107).